Here is a 523-residue protein sequence, read N- to C-terminus: Occludin (523 aa).

The disordered stretch occupies residues 1–20 (MSVRPFESPPPYRPDEFKPN). The Cytoplasmic segment spans residues 1–66 (MSVRPFESPP…KWTSPPGVIR (66 aa)). Positions 60-269 (SPPGVIRILS…IIVFAVKTRR (210 aa)) constitute an MARVEL domain. The chain crosses the membrane as a helical span at residues 67-87 (ILSMLVIVMCIAVFACVASTL). At 88–140 (AWDRAYGTGIFGGSMNYPYGSGFGSYGGGFGGYGYGYGYGYGGYTDPRAAKGF) the chain is on the extracellular side. The chain crosses the membrane as a helical span at residues 141-161 (LLAMAAFCFIASLVIFVTSVI). Over 162–173 (RSGMSRTRRYYL) the chain is Cytoplasmic. The helical transmembrane segment at 174-194 (IVIIVSAILGIMVFIATIVYI) threads the bilayer. Residues 195-244 (MGVNPTAQASGSMYGSQIYTICSQFYTPGGTGLYVDQYLYHYCVVDPQEA) are Extracellular-facing. A disulfide bridge connects residues cysteine 216 and cysteine 237. A helical membrane pass occupies residues 245–265 (IAIVLGFMIIVAFALIIVFAV). At 266-523 (KTRRKMDRYD…MVGDYDRRKT (258 aa)) the chain is on the cytoplasmic side. Position 302 is a phosphoserine (serine 302). The disordered stretch occupies residues 302-338 (SAGTQDMPPPPSDYAERVDSPMAYSSNGKVNGKRSYP). Position 305 is a phosphothreonine (threonine 305). Phosphoserine is present on residues serine 313, serine 321, serine 340, and serine 360. The interval 363-408 (DFRQPRYSSNDNLETPSKRTPTKGKAGKAKRTDPDHYETDYTTGGE) is disordered. The span at 368–381 (RYSSNDNLETPSKR) shows a compositional bias: polar residues. The residue at position 369 (tyrosine 369) is a Phosphotyrosine. Serine 370 and serine 371 each carry phosphoserine. The segment covering 382–391 (TPTKGKAGKA) has biased composition (basic residues). The segment covering 392–401 (KRTDPDHYET) has biased composition (basic and acidic residues). Residues tyrosine 399 and tyrosine 403 each carry the phosphotyrosine modification. 2 positions are modified to phosphothreonine; by PKC/PRKCH: threonine 404 and threonine 405. Serine 409 carries the phosphoserine modification. The region spanning 415–523 (EDWLREYPPI…MVGDYDRRKT (109 aa)) is the OCEL domain. Residues 433 to 489 (YKRNFDAGLQEYKSLLAELDEVNKELSRLDRELDDYREESEEYMAAADEYNRLKQVK) are a coiled coil. Serine 491 carries the phosphoserine modification.

This sequence belongs to the ELL/occludin family. As to quaternary structure, interacts with TJP1/ZO1. Interacts with VAPA. Interacts with CLDN1, CLDN6, CLDN9, CLDN11, CLDN12 and CLDN17. Interacts with PLSCR1. Interacts with LSR, ILDR1 and ILDR2. Interacts with TJP2/ZO2. Post-translationally, dephosphorylated by PTPRJ.

The protein resides in the cell membrane. It is found in the cell junction. Its subcellular location is the tight junction. Its function is as follows. May play a role in the formation and regulation of the tight junction (TJ) paracellular permeability barrier. May be involved in the organization of actin in endothelial cells. This Rattus norvegicus (Rat) protein is Occludin (Ocln).